A 351-amino-acid polypeptide reads, in one-letter code: MNDRLITPDASGEDEAIDRAIRPRRLTDYIGQPVVREQMEIFVHAARGRGEALDHTLIFGPPGLGKTTLAHIIANEMGVSMRQTSGPVLDKPGDLAALLTNLEPHDVLFVDEIHRLSAVVEEVLYPAMEDFQIDIMIGEGPAARSIKLDLPPFTLVGATTRAGLLTSPLRDRFGIVQRLEYYNVADLSGIVKRSAHLLNLSIDETGCQEIAGRARGTPRIANRLLRRVRDYAEVRADGHISGEVAHAAMELLNVDRNGFDEQDRRLLLAIMEKFDGGPVGLDSIAAAIGEERGTIEDVVEPYLIQQGYLMRTPRGRMATRNAWLHFGLNPPRQPDTSPDLFQDAPPVGRER.

The tract at residues 1-182 (MNDRLITPDA…FGIVQRLEYY (182 aa)) is large ATPase domain (RuvB-L). ATP is bound by residues isoleucine 21, arginine 22, glycine 63, lysine 66, threonine 67, threonine 68, 129–131 (EDF), arginine 172, tyrosine 182, and arginine 219. Threonine 67 is a binding site for Mg(2+). The tract at residues 183–253 (NVADLSGIVK…VAHAAMELLN (71 aa)) is small ATPAse domain (RuvB-S). Residues 256–351 (RNGFDEQDRR…QDAPPVGRER (96 aa)) form a head domain (RuvB-H) region. DNA is bound by residues arginine 292, arginine 311, and arginine 316. The disordered stretch occupies residues 328-351 (LNPPRQPDTSPDLFQDAPPVGRER).

It belongs to the RuvB family. In terms of assembly, homohexamer. Forms an RuvA(8)-RuvB(12)-Holliday junction (HJ) complex. HJ DNA is sandwiched between 2 RuvA tetramers; dsDNA enters through RuvA and exits via RuvB. An RuvB hexamer assembles on each DNA strand where it exits the tetramer. Each RuvB hexamer is contacted by two RuvA subunits (via domain III) on 2 adjacent RuvB subunits; this complex drives branch migration. In the full resolvosome a probable DNA-RuvA(4)-RuvB(12)-RuvC(2) complex forms which resolves the HJ.

Its subcellular location is the cytoplasm. It carries out the reaction ATP + H2O = ADP + phosphate + H(+). In terms of biological role, the RuvA-RuvB-RuvC complex processes Holliday junction (HJ) DNA during genetic recombination and DNA repair, while the RuvA-RuvB complex plays an important role in the rescue of blocked DNA replication forks via replication fork reversal (RFR). RuvA specifically binds to HJ cruciform DNA, conferring on it an open structure. The RuvB hexamer acts as an ATP-dependent pump, pulling dsDNA into and through the RuvAB complex. RuvB forms 2 homohexamers on either side of HJ DNA bound by 1 or 2 RuvA tetramers; 4 subunits per hexamer contact DNA at a time. Coordinated motions by a converter formed by DNA-disengaged RuvB subunits stimulates ATP hydrolysis and nucleotide exchange. Immobilization of the converter enables RuvB to convert the ATP-contained energy into a lever motion, pulling 2 nucleotides of DNA out of the RuvA tetramer per ATP hydrolyzed, thus driving DNA branch migration. The RuvB motors rotate together with the DNA substrate, which together with the progressing nucleotide cycle form the mechanistic basis for DNA recombination by continuous HJ branch migration. Branch migration allows RuvC to scan DNA until it finds its consensus sequence, where it cleaves and resolves cruciform DNA. This Alkalilimnicola ehrlichii (strain ATCC BAA-1101 / DSM 17681 / MLHE-1) protein is Holliday junction branch migration complex subunit RuvB.